Consider the following 297-residue polypeptide: Myozenin-1 (297 aa).

The tract at residues 1-34 (MPLSGTPAPNKKRKSSKLIMELTGGGQESSGLNL) is disordered. S82 is subject to Phosphoserine. The segment at 105–172 (FSYSKSSGGG…ALPDNQAGGE (68 aa)) is disordered. The segment covering 118 to 128 (RSGSAGQYGSD) has biased composition (low complexity). Over residues 136-162 (SGSGSGSGSGPGSGGAGGPGGHSGRGG) the composition is skewed to gly residues.

It belongs to the myozenin family. In terms of assembly, interacts with ACTN2, ACTN3, FLNA, FLNB, FLNC, LDB3, PPP3CA and TCAP. Interacts via its C-terminal region with MYOT.

It is found in the nucleus. The protein resides in the cell projection. Its subcellular location is the pseudopodium. Its function is as follows. Myozenins may serve as intracellular binding proteins involved in linking Z-disk proteins such as alpha-actinin, gamma-filamin, TCAP/telethonin, LDB3/ZASP and localizing calcineurin signaling to the sarcomere. Plays an important role in the modulation of calcineurin signaling. May play a role in myofibrillogenesis. The sequence is that of Myozenin-1 (MYOZ1) from Bos taurus (Bovine).